A 315-amino-acid chain; its full sequence is Putative S-adenosyl-L-methionine-dependent methyltransferase MAV_4557 (315 aa).

S-adenosyl-L-methionine is bound by residues D134 and 163–164; that span reads DL.

This sequence belongs to the UPF0677 family.

In terms of biological role, exhibits S-adenosyl-L-methionine-dependent methyltransferase activity. This chain is Putative S-adenosyl-L-methionine-dependent methyltransferase MAV_4557, found in Mycobacterium avium (strain 104).